A 599-amino-acid polypeptide reads, in one-letter code: Fructan 1-exohydrolase (599 aa).

The signal sequence occupies residues 1–16; sequence MAQAWAFLLLPALALA. Aspartate 78 is an active-site residue. 3 N-linked (GlcNAc...) asparagine glycosylation sites follow: asparagine 171, asparagine 239, and asparagine 251. Cysteines 449 and 495 form a disulfide.

It belongs to the glycosyl hydrolase 32 family.

The enzyme catalyses Hydrolysis of terminal, non-reducing (2-&gt;1)-linked beta-D-fructofuranose residues in fructans.. Inhibited by sucrose. Hydrolyzes inulin-type beta-(2,1)-fructans. May play a role as a beta-(2,1)-trimmer during graminan biosynthesis. The polypeptide is Fructan 1-exohydrolase (Hordeum vulgare (Barley)).